A 572-amino-acid polypeptide reads, in one-letter code: E3 ubiquitin-protein ligase ZFP91 (572 aa).

Basic and acidic residues predominate over residues 1 to 12 (MPGETEEPRSPE). The tract at residues 1–308 (MPGETEEPRS…PRLPKRRKKP (308 aa)) is disordered. A compositionally biased stretch (low complexity) spans 61-70 (AAAAAAAAAA). A compositionally biased stretch (basic residues) spans 72-85 (SRRRKAEYPRRRRS). Phosphoserine is present on residues serine 86 and serine 106. Residues 122-131 (LTTDKDPKEE) show a composition bias toward basic and acidic residues. Over residues 143–162 (SITTTRASRSWRSSSRTSIS) the composition is skewed to low complexity. Residues 209–225 (SDEEEEEEEEMLISEEE) are compositionally biased toward acidic residues. Basic and acidic residues-rich tracts occupy residues 226 to 247 (IPFKDDPRDETYKPHLERETPK) and 254 to 271 (KVKEEKEKKEIKVEVEVE). Acidic residues predominate over residues 272-284 (VKEEENEIREDEE). C2H2-type zinc fingers lie at residues 313–338 (VRCEMEGCGTVLAHPRYLQHHIKYQH), 344–368 (YVCPHPSCGRLFRLQKQLLRHAKHH), 374–396 (YICEYCARAFKSSHNLAVHRMIH), 402–424 (LQCEICGFTCRQKASLNWHMKKH), and 432–455 (FSCNICGKKFEKKDSVVAHKAKSH). The interaction with MAP3K14/NIK stretch occupies residues 340 to 370 (LKKKYVCPHPSCGRLFRLQKQLLRHAKHHTD).

This sequence belongs to the krueppel C2H2-type zinc-finger protein family. As to quaternary structure, interacts with MAP3K14/NIK. Found in all the examined tissues including brain, heart, kidney, lung, liver, spleen, thymus, skeletal muscle, ovary and testis.

Its subcellular location is the nucleus. It carries out the reaction S-ubiquitinyl-[E2 ubiquitin-conjugating enzyme]-L-cysteine + [acceptor protein]-L-lysine = [E2 ubiquitin-conjugating enzyme]-L-cysteine + N(6)-ubiquitinyl-[acceptor protein]-L-lysine.. It functions in the pathway protein modification; protein ubiquitination. Atypical E3 ubiquitin-protein ligase that mediates 'Lys-63'-linked ubiquitination of MAP3K14/NIK, leading to stabilize and activate MAP3K14/NIK. It thereby acts as an activator of the non-canonical NF-kappa-B2/NFKB2 pathway. May also play an important role in cell proliferation and/or anti-apoptosis. The chain is E3 ubiquitin-protein ligase ZFP91 (Zfp91) from Mus musculus (Mouse).